A 188-amino-acid polypeptide reads, in one-letter code: Defensin-like protein 99 (188 aa).

Residues 1–28 (MGSLKLSTVVVTALVVCLSILLISPTEA) form the signal peptide. 7 cysteine pairs are disulfide-bonded: cysteine 37–cysteine 95, cysteine 45–cysteine 77, cysteine 58–cysteine 92, cysteine 62–cysteine 94, cysteine 123–cysteine 178, cysteine 137–cysteine 175, and cysteine 141–cysteine 177.

The protein belongs to the DEFL family.

It is found in the secreted. This Arabidopsis thaliana (Mouse-ear cress) protein is Defensin-like protein 99.